Here is a 160-residue protein sequence, read N- to C-terminus: General odorant-binding protein 2 (160 aa).

A signal peptide spans 1–20 (MFSFLILVFVASVADSVIGT). Intrachain disulfides connect Cys38-Cys73, Cys69-Cys127, and Cys116-Cys136.

Belongs to the PBP/GOBP family. In terms of assembly, homodimer. Detected in antenna (at protein level). Expressed at high levels in antenna.

Functionally, present in the aqueous fluid surrounding olfactory sensory dendrites and are thought to aid in the capture and transport of hydrophobic odorants into and through this fluid. The protein is General odorant-binding protein 2 of Bombyx mori (Silk moth).